The following is a 112-amino-acid chain: Putative pterin-4-alpha-carbinolamine dehydratase (112 aa).

It belongs to the pterin-4-alpha-carbinolamine dehydratase family.

It carries out the reaction (4aS,6R)-4a-hydroxy-L-erythro-5,6,7,8-tetrahydrobiopterin = (6R)-L-erythro-6,7-dihydrobiopterin + H2O. This is Putative pterin-4-alpha-carbinolamine dehydratase from Shewanella baltica (strain OS155 / ATCC BAA-1091).